The sequence spans 185 residues: Monothiol glutaredoxin-S4, mitochondrial (185 aa).

A mitochondrion-targeting transit peptide spans 1–36 (MARLMSSALIRGLVRSSCSPTVAAVAQPTIHQFRNY). Residues 37–74 (SSGLGGDSTATGDSSSTRVAADPDTHQDFQPTTKSSNM) are disordered. Residues 43 to 53 (DSTATGDSSST) show a composition bias toward low complexity. Residues 64–74 (DFQPTTKSSNM) are compositionally biased toward polar residues. The Glutaredoxin domain maps to 77–179 (DDIVSQDIKE…DVLGDIAQKR (103 aa)). Lys94 provides a ligand contact to glutathione. [2Fe-2S] cluster is bound at residue Cys102. Glutathione-binding positions include Lys131, Phe143, and 156 to 157 (SD).

Belongs to the glutaredoxin family. CGFS subfamily.

The protein resides in the mitochondrion. Functionally, may only reduce GSH-thiol disulfides, but not protein disulfides. This Oryza sativa subsp. japonica (Rice) protein is Monothiol glutaredoxin-S4, mitochondrial (GRXS4).